A 95-amino-acid chain; its full sequence is Protein TusB (95 aa).

It belongs to the DsrH/TusB family. In terms of assembly, heterohexamer, formed by a dimer of trimers. The hexameric TusBCD complex contains 2 copies each of TusB, TusC and TusD. The TusBCD complex interacts with TusE.

Its subcellular location is the cytoplasm. Functionally, part of a sulfur-relay system required for 2-thiolation of 5-methylaminomethyl-2-thiouridine (mnm(5)s(2)U) at tRNA wobble positions. The sequence is that of Protein TusB from Escherichia coli O157:H7.